The sequence spans 199 residues: Type-4 uracil-DNA glycosylase (199 aa).

The [4Fe-4S] cluster site is built by cysteine 14 and cysteine 17. Uracil-binding positions include 41–43, phenylalanine 55, and asparagine 81; that span reads GEA. Positions 77-114 are pseudo-FCL; the sequence is VYITNVLKCRPPNNRDPTPEEVEKCGDYLVRQLEAIRP. Positions 85 and 101 each coordinate [4Fe-4S] cluster. Uracil is bound at residue histidine 163.

Belongs to the uracil-DNA glycosylase (UDG) superfamily. Type 4 (UDGa) family.

It catalyses the reaction Hydrolyzes single-stranded DNA or mismatched double-stranded DNA and polynucleotides, releasing free uracil.. With respect to regulation, product-inhibited by both uracil and apurinic/apyrimidinic sites. Removes uracil bases that are present in DNA as a result of either deamination of cytosine or misincorporation of dUMP instead of dTMP. Can remove uracil from double-stranded DNA containing either a U/G or U/A base pair as well as from single-stranded DNA. This chain is Type-4 uracil-DNA glycosylase, found in Archaeoglobus fulgidus (strain ATCC 49558 / DSM 4304 / JCM 9628 / NBRC 100126 / VC-16).